An 862-amino-acid polypeptide reads, in one-letter code: Valine--tRNA ligase (862 aa).

The 'HIGH' region signature appears at 47-57 (PTASGSLHIGH). The tract at residues 110–130 (EPGLTPPFEGGDNKSSKAADQ) is disordered. Residues 120–129 (GDNKSSKAAD) are compositionally biased toward basic and acidic residues. The 'KMSKS' region signature appears at 584–588 (KMSKS). An ATP-binding site is contributed by Lys587.

It belongs to the class-I aminoacyl-tRNA synthetase family. ValS type 2 subfamily. Monomer.

It localises to the cytoplasm. It carries out the reaction tRNA(Val) + L-valine + ATP = L-valyl-tRNA(Val) + AMP + diphosphate. Functionally, catalyzes the attachment of valine to tRNA(Val). As ValRS can inadvertently accommodate and process structurally similar amino acids such as threonine, to avoid such errors, it has a 'posttransfer' editing activity that hydrolyzes mischarged Thr-tRNA(Val) in a tRNA-dependent manner. This chain is Valine--tRNA ligase, found in Leifsonia xyli subsp. xyli (strain CTCB07).